The primary structure comprises 121 residues: Small ribosomal subunit protein uS13 (121 aa).

The interval 93-121 is disordered; the sequence is RGLPMRGQRTRTNARTRKGPRKSAAALKK.

It belongs to the universal ribosomal protein uS13 family. As to quaternary structure, part of the 30S ribosomal subunit. Forms a loose heterodimer with protein S19. Forms two bridges to the 50S subunit in the 70S ribosome.

In terms of biological role, located at the top of the head of the 30S subunit, it contacts several helices of the 16S rRNA. In the 70S ribosome it contacts the 23S rRNA (bridge B1a) and protein L5 of the 50S subunit (bridge B1b), connecting the 2 subunits; these bridges are implicated in subunit movement. Contacts the tRNAs in the A and P-sites. The sequence is that of Small ribosomal subunit protein uS13 from Methylibium petroleiphilum (strain ATCC BAA-1232 / LMG 22953 / PM1).